A 570-amino-acid chain; its full sequence is Peptidyl-prolyl cis-trans isomerase FKBP9 (570 aa).

Residues 1-24 form the signal peptide; the sequence is MAFGARGWRRWSLLLLLLWVTGQA. 4 consecutive PPIase FKBP-type domains span residues 54–142, 166–254, 278–365, and 389–477; these read GDFV…VDIW, SDFV…LDLH, GDFL…IDFH, and GDYL…LELV. 4 N-linked (GlcNAc...) asparagine glycosylation sites follow: Asn-174, Asn-286, Asn-302, and Asn-397. EF-hand domains lie at 488–523 and 533–568; these read WNGE…QVAS and NAEM…TKHD. Ca(2+) contacts are provided by Asp-501, Asp-503, Asn-505, Glu-507, Glu-512, Asp-546, Asn-548, Asp-550, Lys-552, and Glu-557. The Prevents secretion from ER motif lies at 567 to 570; it reads HDEL.

Phosphorylated.

It localises to the endoplasmic reticulum lumen. The enzyme catalyses [protein]-peptidylproline (omega=180) = [protein]-peptidylproline (omega=0). With respect to regulation, inhibited by FK506. In terms of biological role, PPIases accelerate the folding of proteins during protein synthesis. The chain is Peptidyl-prolyl cis-trans isomerase FKBP9 (Fkbp9) from Rattus norvegicus (Rat).